A 336-amino-acid polypeptide reads, in one-letter code: Glyceraldehyde-3-phosphate dehydrogenase 1 (336 aa).

Residues R12–I13, D34, and S120 contribute to the NAD(+) site. Residues S150–T152, T181, R198, T211–G212, and R234 contribute to the D-glyceraldehyde 3-phosphate site. The Nucleophile role is filled by C151. N316 lines the NAD(+) pocket.

It belongs to the glyceraldehyde-3-phosphate dehydrogenase family. In terms of assembly, homotetramer.

It localises to the cytoplasm. The catalysed reaction is D-glyceraldehyde 3-phosphate + phosphate + NAD(+) = (2R)-3-phospho-glyceroyl phosphate + NADH + H(+). Its pathway is carbohydrate degradation; glycolysis; pyruvate from D-glyceraldehyde 3-phosphate: step 1/5. Functionally, catalyzes the oxidative phosphorylation of glyceraldehyde 3-phosphate (G3P) to 1,3-bisphosphoglycerate (BPG) using the cofactor NAD. The first reaction step involves the formation of a hemiacetal intermediate between G3P and a cysteine residue, and this hemiacetal intermediate is then oxidized to a thioester, with concomitant reduction of NAD to NADH. The reduced NADH is then exchanged with the second NAD, and the thioester is attacked by a nucleophilic inorganic phosphate to produce BPG. The sequence is that of Glyceraldehyde-3-phosphate dehydrogenase 1 (gapA1) from Staphylococcus epidermidis (strain ATCC 35984 / DSM 28319 / BCRC 17069 / CCUG 31568 / BM 3577 / RP62A).